The sequence spans 439 residues: Histidine--tRNA ligase (439 aa).

The protein belongs to the class-II aminoacyl-tRNA synthetase family. As to quaternary structure, homodimer.

The protein localises to the cytoplasm. The catalysed reaction is tRNA(His) + L-histidine + ATP = L-histidyl-tRNA(His) + AMP + diphosphate + H(+). This chain is Histidine--tRNA ligase, found in Leptospira interrogans serogroup Icterohaemorrhagiae serovar copenhageni (strain Fiocruz L1-130).